A 305-amino-acid chain; its full sequence is Outer membrane protein assembly factor BamD (305 aa).

The N-terminal stretch at 1–24 (MLRIFQGRPAVTIAAVLVAASVAG) is a signal peptide. C25 carries N-palmitoyl cysteine lipidation. The S-diacylglycerol cysteine moiety is linked to residue C25. TPR repeat units follow at residues 41–74 (VELL…HPYS), 78–111 (RRSI…YPGN), 113–136 (SAQY…NRDQ), and 174–207 (AGKE…HQTT).

It belongs to the BamD family. As to quaternary structure, part of the Bam complex.

It localises to the cell outer membrane. Part of the outer membrane protein assembly complex, which is involved in assembly and insertion of beta-barrel proteins into the outer membrane. This is Outer membrane protein assembly factor BamD from Caulobacter vibrioides (strain ATCC 19089 / CIP 103742 / CB 15) (Caulobacter crescentus).